The primary structure comprises 199 residues: MAFELPNLPYGFDALEPHIDQQTMEIHHGKHHNTYVTKLNAAVEGTDLESKSIEEIVANLDSVPENIQTAVRNNGGGHLNHSLFWELLTPNSEEKGTVVDKIKEQWGSLDAFKEEFADKAAARFGSGWAWLVVNNGNLEIVTTPNQDNPITEGKTPILGLDVWEHAYYLKYQNKRPDYISAFWNVVNWEKVDELYNAAK.

Residues His27, His81, Asp161, and His165 each coordinate Fe(3+). Residues His27, His81, Asp161, and His165 each coordinate Mn(2+).

Belongs to the iron/manganese superoxide dismutase family. As to quaternary structure, homodimer. Requires Mn(2+) as cofactor. Fe(3+) is required as a cofactor.

It catalyses the reaction 2 superoxide + 2 H(+) = H2O2 + O2. Destroys superoxide anion radicals which are normally produced within the cells and which are toxic to biological systems. Catalyzes the dismutation of superoxide anion radicals into O2 and H2O2 by successive reduction and oxidation of the transition metal ion at the active site. Also contributes to the inhibition of lipid oxidation. Manganese-preferring enzyme, less active with iron than with manganese. In Staphylococcus xylosus, this protein is Superoxide dismutase [Mn/Fe] (sodA).